The following is a 419-amino-acid chain: Light-dependent chlorophyll f synthase (419 aa).

Transmembrane regions (helical) follow at residues 73-90 (YIGW…TAAI), 162-177 (HFII…EWEL), 186-200 (WISL…ASVS), 241-262 (LHQM…HGSL), and 323-337 (CLAA…SAAI). A chlorophyll is bound at residue His162. His242 serves as a coordination point for a chlorophyll.

This sequence belongs to the reaction center PufL/M/PsbA/D family. As to quaternary structure, homodimer.

Its subcellular location is the cellular thylakoid membrane. Functionally, synthesizes chlorophyll f or chlorophyllide f (Chl f, 2-formyl chlorophyll a), probably by oxidation of chlorophyll a or chlorophyllide a and reduction of plastoquinone. The reaction is probably light-dependent. Chl f absorbs far red light (FRL, 707 nm in 100% methanol), and is synthesized when cells are grown in FRL, where it provides the advantage of extending the spectral range of harvested light in terrestrial cyanobacteria. Chl f synthesis is probably light-dependent. The sequence is that of Light-dependent chlorophyll f synthase from Synechococcus sp. (strain ATCC 29403 / PCC 7335).